The sequence spans 78 residues: Large ribosomal subunit protein bL28 (78 aa).

Belongs to the bacterial ribosomal protein bL28 family.

The chain is Large ribosomal subunit protein bL28 from Prochlorococcus marinus (strain MIT 9303).